Reading from the N-terminus, the 251-residue chain is uncharacterized protein (251 aa).

36–43 (GKQGTGKT) contributes to the ATP binding site. The interval 230–251 (SDNKTENPSNPSLLTKIDDVTR) is disordered.

Its function is as follows. This protein may be involved in virus assembly. Essential for virus function. This is an uncharacterized protein from Sulfolobus spindle-shape virus 1 (SSV1).